Consider the following 204-residue polypeptide: Large ribosomal subunit protein uL4 (204 aa).

Residues 47–69 (KAQKNRAAVSGGGKKPWRQKGTG) are disordered.

Belongs to the universal ribosomal protein uL4 family. Part of the 50S ribosomal subunit.

In terms of biological role, one of the primary rRNA binding proteins, this protein initially binds near the 5'-end of the 23S rRNA. It is important during the early stages of 50S assembly. It makes multiple contacts with different domains of the 23S rRNA in the assembled 50S subunit and ribosome. Forms part of the polypeptide exit tunnel. The chain is Large ribosomal subunit protein uL4 from Teredinibacter turnerae (strain ATCC 39867 / T7901).